The following is a 176-amino-acid chain: Endothelin-2 (176 aa).

An N-terminal signal peptide occupies residues 1–22 (MVSPAWCSIALALLLALHEGKG). The propeptide occupies 23-44 (QAAATMEQPASAPKGRGPHLRF). 2 cysteine pairs are disulfide-bonded: C47-C61 and C49-C57. The propeptide occupies 68–176 (VNTAGQTAPY…IPAHSRRRKR (109 aa)). Residues 94–109 (CECSSAGDSACATFCH) are endothelin-like.

It belongs to the endothelin/sarafotoxin family.

It is found in the secreted. Vasoconstrictor. The chain is Endothelin-2 (Edn2) from Rattus norvegicus (Rat).